The chain runs to 456 residues: Hydroxyproline dehydrogenase (456 aa).

N6-acetyllysine occurs at positions 310 and 320.

Belongs to the proline oxidase family. The cofactor is FAD.

The catalysed reaction is trans-4-hydroxy-L-proline + a quinone = (3R,5S)-1-pyrroline-3-hydroxy-5-carboxylate + a quinol + H(+). It carries out the reaction L-proline + a quinone = (S)-1-pyrroline-5-carboxylate + a quinol + H(+). Functionally, dehydrogenase that converts trans-4-L-hydroxyproline to delta-1-pyrroline-3-hydroxy-5-carboxylate (Hyp) using ubiquinone-10 as the terminal electron acceptor. Can also use proline as a substrate but with a very much lower efficiency. Does not react with other diastereomers of Hyp: trans-4-D-hydroxyproline and cis-4-L-hydroxyproline. Ubiquininone analogs such as menadione, duroquinone and ubiquinone-1 react more efficiently than oxygen as the terminal electron acceptor during catalysis. The polypeptide is Hydroxyproline dehydrogenase (Mus musculus (Mouse)).